A 101-amino-acid polypeptide reads, in one-letter code: PAT complex subunit Asterix (101 aa).

Residues Met-1–Asp-26 are disordered. Over Met-1–Pro-27 the chain is Cytoplasmic. Residues Thr-28–Leu-46 traverse the membrane as a helical segment. A topological domain (lumenal) is located at residue Lys-47. Residues Leu-48–Asn-65 form a helical membrane-spanning segment. The Cytoplasmic segment spans residues Ser-66–Ser-69. Residues Glu-70 to Tyr-90 form a helical membrane-spanning segment. The Lumenal segment spans residues Leu-91 to Trp-101.

This sequence belongs to the Asterix family. As to quaternary structure, component of the multi-pass translocon (MPT) complex.

Its subcellular location is the endoplasmic reticulum membrane. Functionally, component of the multi-pass translocon (MPT) complex that mediates insertion of multi-pass membrane proteins into the lipid bilayer of membranes. The MPT complex takes over after the SEC61 complex: following membrane insertion of the first few transmembrane segments of proteins by the SEC61 complex, the MPT complex occludes the lateral gate of the SEC61 complex to promote insertion of subsequent transmembrane regions. The polypeptide is PAT complex subunit Asterix (WDR83OS) (Gallus gallus (Chicken)).